The sequence spans 216 residues: Probable GTP-binding protein EngB (216 aa).

Residues 24 to 205 (ATPEIAFVGR…WARLAALAAE (182 aa)) enclose the EngB-type G domain. GTP contacts are provided by residues 32–39 (GRSNVGKS), 59–63 (GRTRA), 86–89 (DLPG), 153–156 (TKTD), and 184–186 (FSA). Positions 39 and 61 each coordinate Mg(2+).

It belongs to the TRAFAC class TrmE-Era-EngA-EngB-Septin-like GTPase superfamily. EngB GTPase family. It depends on Mg(2+) as a cofactor.

Functionally, necessary for normal cell division and for the maintenance of normal septation. This is Probable GTP-binding protein EngB from Anaeromyxobacter dehalogenans (strain 2CP-1 / ATCC BAA-258).